The sequence spans 31 residues: Photosystem II reaction center protein T (31 aa).

A helical membrane pass occupies residues 3 to 23 (ALVYTFLLIGTLGIIFFAIFF).

It belongs to the PsbT family. As to quaternary structure, PSII is composed of 1 copy each of membrane proteins PsbA, PsbB, PsbC, PsbD, PsbE, PsbF, PsbH, PsbI, PsbJ, PsbK, PsbL, PsbM, PsbT, PsbY, PsbZ, Psb30/Ycf12, at least 3 peripheral proteins of the oxygen-evolving complex and a large number of cofactors. It forms dimeric complexes.

It localises to the plastid. Its subcellular location is the chloroplast thylakoid membrane. Found at the monomer-monomer interface of the photosystem II (PS II) dimer, plays a role in assembly and dimerization of PSII. PSII is a light-driven water plastoquinone oxidoreductase, using light energy to abstract electrons from H(2)O, generating a proton gradient subsequently used for ATP formation. This Tetradesmus obliquus (Green alga) protein is Photosystem II reaction center protein T.